A 357-amino-acid chain; its full sequence is Ribosomal RNA small subunit methyltransferase C (357 aa).

The protein belongs to the methyltransferase superfamily. RsmC family. Monomer.

The protein resides in the cytoplasm. It carries out the reaction guanosine(1207) in 16S rRNA + S-adenosyl-L-methionine = N(2)-methylguanosine(1207) in 16S rRNA + S-adenosyl-L-homocysteine + H(+). Its function is as follows. Specifically methylates the guanine in position 1207 of 16S rRNA in the 30S particle. In Colwellia psychrerythraea (strain 34H / ATCC BAA-681) (Vibrio psychroerythus), this protein is Ribosomal RNA small subunit methyltransferase C.